A 368-amino-acid chain; its full sequence is Microtubule-associated protein Jupiter (368 aa).

The residue at position 30 (Ser30) is a Phosphoserine. The residue at position 41 (Thr41) is a Phosphothreonine. A compositionally biased stretch (basic and acidic residues) spans 81 to 93; that stretch reads RRGQKSVDSHSRL. The interval 81–106 is disordered; the sequence is RRGQKSVDSHSRLFGEPSRPITPGKN. At Thr102 the chain carries Phosphothreonine. Phosphoserine is present on residues Ser111, Ser146, and Ser157. 2 stretches are compositionally biased toward low complexity: residues 129–157 and 238–248; these read NGNT…VSSS and GRYGYSSQSRR. 3 disordered regions span residues 129–164, 196–256, and 316–368; these read NGNT…LKIN, SQGN…SPLN, and KPKK…SGLW. Over residues 337–354 the composition is skewed to polar residues; sequence GSDSAQTPTMNGANQVIN.

It belongs to the MAP Jupiter family.

It localises to the nucleus. Its subcellular location is the cytoplasm. The protein resides in the cytoskeleton. The protein localises to the spindle. In terms of biological role, binds to all microtubule populations. This Drosophila willistoni (Fruit fly) protein is Microtubule-associated protein Jupiter.